Here is a 190-residue protein sequence, read N- to C-terminus: MPTETTPRFRIRQCAARLQAGGVVAYPTEAVYGLGCDPGDPAAVATLLTLKRRDPGKGLILIASRVSQLSPWLGDAPLPQAVLASWPGPNTWLLPAAPHTPAWITGGRAKVAVRVTAHPVAAALCEAFGGAIVSTSANRDGQPPARSATQVRTRLGAEAAELADILPGPVDRSARPTAIRDAESGAVIRA.

In terms of domain architecture, YrdC-like spans 8–190 (RFRIRQCAAR…DAESGAVIRA (183 aa)).

This sequence belongs to the SUA5 family. TsaC subfamily.

The protein resides in the cytoplasm. The catalysed reaction is L-threonine + hydrogencarbonate + ATP = L-threonylcarbamoyladenylate + diphosphate + H2O. Required for the formation of a threonylcarbamoyl group on adenosine at position 37 (t(6)A37) in tRNAs that read codons beginning with adenine. Catalyzes the conversion of L-threonine, HCO(3)(-)/CO(2) and ATP to give threonylcarbamoyl-AMP (TC-AMP) as the acyladenylate intermediate, with the release of diphosphate. The chain is Threonylcarbamoyl-AMP synthase from Alkalilimnicola ehrlichii (strain ATCC BAA-1101 / DSM 17681 / MLHE-1).